A 2373-amino-acid chain; its full sequence is Highly reducing polyketide synthase (2373 aa).

The Ketosynthase family 3 (KS3) domain occupies 19 to 446 (QEPIAVVGIA…GSNAHVIVEE (428 aa)). Active-site for beta-ketoacyl synthase activity residues include cysteine 192, histidine 329, and histidine 369. The malonyl-CoA:ACP transacylase (MAT) domain stretch occupies residues 560-874 (IFTGQGAQWP…QYTSAMARGA (315 aa)). Serine 652 serves as the catalytic For malonyltransferase activity. Positions 942–1078 (HDLLGSKVLG…GLIRIDEDVP (137 aa)) are N-terminal hotdog fold. The interval 942 to 1241 (HDLLGSKVLG…LSGLRYTRID (300 aa)) is dehydratase (DH) domain. Residues 942 to 1246 (HDLLGSKVLG…YTRIDTGPSV (305 aa)) enclose the PKS/mFAS DH domain. Histidine 974 functions as the Proton acceptor; for dehydratase activity in the catalytic mechanism. A C-terminal hotdog fold region spans residues 1090–1246 (SHQVDASLWH…YTRIDTGPSV (157 aa)). Aspartate 1154 serves as the catalytic Proton donor; for dehydratase activity. An enoyl reductase (ER) domain region spans residues 1669–1985 (GTTDSLIYSE…SANHIGKIVI (317 aa)). Positions 2010–2187 (GYLLIGGLKG…NSVDLGAIQD (178 aa)) are ketoreductase (KR) domain. Residues 2294-2370 (AIHDAVIDVT…QLAQKIVARL (77 aa)) enclose the Carrier domain. Serine 2330 is modified (O-(pantetheine 4'-phosphoryl)serine).

Requires pantetheine 4'-phosphate as cofactor.

Its pathway is mycotoxin biosynthesis. Its function is as follows. Highly reducing polyketide synthase; part of the gene cluster that mediates the biosynthesis of brefeldin A (BFA), a protein transport inhibitor that shows antiviral, antifungal, and antitumor properties. The proposed biosynthesis of BFA involves formation of an acyclic polyketide chain that is differentially tailored throughout the backbone. The highly reducing polyketide synthase Bref-PKS is proposed to synthesize the precisely reduced octaketide precursor, which could then be directly offloaded by the thiohydrolase enzyme Bref-TH followed by a cytochrome P450 monooxygenase-mediated formation of the cyclopentane ring and macrocyclization to afford 7-deoxy BFA. Alternatively, the first ring annulation can also occur on the ACP-tethered intermediate before the thiohydrolase release and lactonization. The C7-hydroxylation by another cytochrome P450 monooxygenase is believed to be the final step in the process to obtain the final structure of BFA. In addition to the HRPKS Bref-PKS and the thiohydrolase Bref-TH, the brefeldin A biosynthesis cluster contains 4 cytochrome p450 monooxygenases (called orf3 to orf6), as well a the probable cluster-specific transcription regulator orf8. This Eupenicillium brefeldianum (Penicillium brefeldianum) protein is Highly reducing polyketide synthase.